Here is a 100-residue protein sequence, read N- to C-terminus: NADH-quinone oxidoreductase subunit K 1 (100 aa).

3 helical membrane passes run 4–24 (LHSY…GVLV), 29–49 (IVIF…FIAL), and 60–80 (IFVF…LALM).

The protein belongs to the complex I subunit 4L family. As to quaternary structure, NDH-1 is composed of 14 different subunits. Subunits NuoA, H, J, K, L, M, N constitute the membrane sector of the complex.

It is found in the cell inner membrane. It catalyses the reaction a quinone + NADH + 5 H(+)(in) = a quinol + NAD(+) + 4 H(+)(out). Its function is as follows. NDH-1 shuttles electrons from NADH, via FMN and iron-sulfur (Fe-S) centers, to quinones in the respiratory chain. The immediate electron acceptor for the enzyme in this species is believed to be ubiquinone. Couples the redox reaction to proton translocation (for every two electrons transferred, four hydrogen ions are translocated across the cytoplasmic membrane), and thus conserves the redox energy in a proton gradient. This is NADH-quinone oxidoreductase subunit K 1 from Geobacter sulfurreducens (strain ATCC 51573 / DSM 12127 / PCA).